Reading from the N-terminus, the 303-residue chain is Tumor necrosis factor receptor type 1-associated DEATH domain protein (303 aa).

The Nuclear export signal signature appears at 141-157 (QKDDELAEIDERLKSIK). The region spanning 208–298 (TSAHIQHFAK…SIALDLLSLN (91 aa)) is the Death domain. The Nuclear localization signal signature appears at 224-237 (KPVGRSLGKTCRAL).

Heterodimer with tnfrsf1a.

Its subcellular location is the nucleus. It localises to the cytoplasm. The protein resides in the cytoskeleton. In terms of biological role, adapter molecule for tnfrsf1a that specifically associates with the cytoplasmic domain of activated tnfrsf1a mediating its interaction with fadd. The chain is Tumor necrosis factor receptor type 1-associated DEATH domain protein from Xenopus laevis (African clawed frog).